A 305-amino-acid chain; its full sequence is L-lactate dehydrogenase (305 aa).

Residues V11, D32, K37, and G76 to V77 each bind NAD(+). Residues Q79, R85, and N117–D120 contribute to the substrate site. NAD(+) is bound by residues A115–N117 and S140. D145–R148 provides a ligand contact to substrate. Beta-D-fructose 1,6-bisphosphate is bound by residues R150 and H165. H172 serves as the catalytic Proton acceptor. Y218 is subject to Phosphotyrosine. T227 contributes to the substrate binding site.

Belongs to the LDH/MDH superfamily. LDH family. In terms of assembly, homotetramer.

Its subcellular location is the cytoplasm. The enzyme catalyses (S)-lactate + NAD(+) = pyruvate + NADH + H(+). The protein operates within fermentation; pyruvate fermentation to lactate; (S)-lactate from pyruvate: step 1/1. Allosterically activated by fructose 1,6-bisphosphate (FBP). Its function is as follows. Catalyzes the conversion of lactate to pyruvate. The polypeptide is L-lactate dehydrogenase (Chloroherpeton thalassium (strain ATCC 35110 / GB-78)).